Consider the following 806-residue polypeptide: Sucrose synthase (806 aa).

The GT-B glycosyltransferase stretch occupies residues 275 to 752 (MVFNVVILSP…GLQRIEEKYT (478 aa)).

Belongs to the glycosyltransferase 1 family. Plant sucrose synthase subfamily.

The enzyme catalyses an NDP-alpha-D-glucose + D-fructose = a ribonucleoside 5'-diphosphate + sucrose + H(+). Sucrose-cleaving enzyme that provides UDP-glucose and fructose for various metabolic pathways. In Vicia faba (Broad bean), this protein is Sucrose synthase (SUCS).